The following is a 648-amino-acid chain: Beta-glucuronidase (648 aa).

Residues 1–19 (GLAMAWAVLGPLLWGCALA) form the signal peptide. 3 N-linked (GlcNAc...) asparagine glycosylation sites follow: Asn170, Asn269, and Asn417. The active-site Proton donor is Glu448. An N-linked (GlcNAc...) asparagine glycan is attached at Asn628.

It belongs to the glycosyl hydrolase 2 family. In terms of assembly, homotetramer.

The protein localises to the lysosome. The enzyme catalyses a beta-D-glucuronoside + H2O = D-glucuronate + an alcohol. With respect to regulation, inhibited by L-aspartic acid. Functionally, plays an important role in the degradation of dermatan and keratan sulfates. In Chlorocebus aethiops (Green monkey), this protein is Beta-glucuronidase (GUSB).